Here is a 392-residue protein sequence, read N- to C-terminus: Probable myosin light chain kinase DDB_G0271550 (392 aa).

Positions 20–278 constitute a Protein kinase domain; that stretch reads YEFGPEIGRG…ASQCIKHPWL (259 aa). Residues 26-34 and lysine 49 each bind ATP; that span reads IGRGAFSIV. Aspartate 142 (proton acceptor) is an active-site residue. A compositionally biased stretch (polar residues) spans 317–326; it reads SQSTPNLHSA. The interval 317 to 392 is disordered; it reads SQSTPNLHSA…NNNNNNNNNI (76 aa). Residues 327 to 392 are compositionally biased toward low complexity; sequence NSNTNTNSLS…NNNNNNNNNI (66 aa).

The protein belongs to the protein kinase superfamily. CAMK Ser/Thr protein kinase family. CaMK subfamily.

It catalyses the reaction L-seryl-[myosin light chain] + ATP = O-phospho-L-seryl-[myosin light chain] + ADP + H(+). The catalysed reaction is L-threonyl-[myosin light chain] + ATP = O-phospho-L-threonyl-[myosin light chain] + ADP + H(+). Functionally, may phosphorylate a specific serine in the N-terminus of a myosin light chain. The chain is Probable myosin light chain kinase DDB_G0271550 from Dictyostelium discoideum (Social amoeba).